The sequence spans 684 residues: Sorbicillinoid biosynthetic cluster transcription factor 2 (684 aa).

Residues 114-151 are disordered; sequence ISSAPSLETPPESVAASPPTVDSIPVSHHVNEDPEAEP.

The protein resides in the nucleus. Its function is as follows. Transcription factor that acts in concert with sorR1 which is a transcriptional activator of the gene cluster that mediates the biosynthesis of sorbicillinoids, a diverse group of yellow secondary metabolites that restrict growth of competing pathogenic fungi but not of bacteria. This is Sorbicillinoid biosynthetic cluster transcription factor 2 from Penicillium rubens (strain ATCC 28089 / DSM 1075 / NRRL 1951 / Wisconsin 54-1255) (Penicillium chrysogenum).